A 269-amino-acid polypeptide reads, in one-letter code: Histone deacetylase HDT1 (269 aa).

Residues proline 97–lysine 269 are disordered. Acidic residues-rich tracts occupy residues phenylalanine 98–isoleucine 115 and lysine 153–glutamate 179. Positions proline 228 to serine 238 are enriched in polar residues. Residues histidine 242 to histidine 265 form a C2H2-type zinc finger.

This sequence belongs to the histone deacetylase HD2 family. Predominantly expressed in ovaries. Accumulates predominantly in the micropylar region of the ovule's integument.

It is found in the nucleus. Its subcellular location is the nucleolus. Functionally, mediates the deacetylation of lysine residues on the N-terminal part of the core histones (H2A, H2B, H3 and H4). Histone deacetylation gives a tag for epigenetic repression and plays an important role in transcriptional regulation, cell cycle progression and developmental events. This is Histone deacetylase HDT1 (HDT1) from Solanum chacoense (Chaco potato).